We begin with the raw amino-acid sequence, 62 residues long: Small ribosomal subunit protein bS21 (62 aa).

A compositionally biased stretch (basic and acidic residues) spans 40–52; it reads KPSVKRKLKSEAA. Residues 40–62 are disordered; sequence KPSVKRKLKSEAARKRKNKRRRY. The span at 53–62 shows a compositional bias: basic residues; sequence RKRKNKRRRY.

Belongs to the bacterial ribosomal protein bS21 family.

The protein is Small ribosomal subunit protein bS21 of Limosilactobacillus fermentum (strain NBRC 3956 / LMG 18251) (Lactobacillus fermentum).